A 528-amino-acid polypeptide reads, in one-letter code: Facilitator of iron transport 1 (528 aa).

Residues 1–18 (MKLSSAFVLSAITVAALG) form the signal peptide. Tandem repeats lie at residues 20–98 (SITT…GSGS), 99–168 (SITT…GSGS), and 169–233 (SITT…GSGS). Positions 20 to 274 (SITTTITATK…ERAPASTVAT (255 aa)) are 4 X approximate tandem repeats. Disordered regions lie at residues 79 to 100 (SIVE…GSSI), 145 to 172 (AAET…SITT), and 214 to 234 (ASPV…SGSS). Composition is skewed to polar residues over residues 81–93 (VEPS…TSAD) and 145–163 (AAET…TSAD). One copy of the 1-4; truncated repeat lies at 234–274 (SITTTITATKNGHVYTKTVTQDATFVWTGEGERAPASTVAT). 12 consecutive repeat copies span residues 289–294 (SIVEAS), 295–300 (SAVETS), 301–306 (SAAETS), 307–312 (SAVETS), 313–318 (SAVETS), 319–324 (SAVETS), 325–330 (SAAETS), 331–336 (SAAETS), 337–342 (SAVETS), 343–348 (SAVEIS), 349–353 (SAVET), and 354–359 (SAVETS). Positions 289 to 359 (SIVEASSAVE…AVETSAVETS (71 aa)) are 12 X 6 AA approximate tandem repeats, Ser/Thr-rich. 2 stretches are compositionally biased toward low complexity: residues 298-388 (ETSS…QASS) and 398-435 (TSSV…SSAT). The disordered stretch occupies residues 298 to 471 (ETSSAAETSS…SNNWSSSSSA (174 aa)). N-linked (GlcNAc...) asparagine glycosylation occurs at N412. The span at 446–457 (YTESSSRDAQSV) shows a compositional bias: polar residues. The span at 462–471 (SNNWSSSSSA) shows a compositional bias: low complexity. The N-linked (GlcNAc...) asparagine glycan is linked to N464. 488 to 495 (GIFTNGKS) contacts ATP. N-linked (GlcNAc...) asparagine glycosylation occurs at N503. The GPI-anchor amidated glycine moiety is linked to residue G506. A propeptide spans 507–528 (AADSIAAGTGLMGAALAAVIFL) (removed in mature form).

The GPI-anchor is attached to the protein in the endoplasmic reticulum and serves to target the protein to the cell surface. There, the glucosamine-inositol phospholipid moiety is cleaved off and the GPI-modified mannoprotein is covalently attached via its lipidless GPI glycan remnant to the 1,6-beta-glucan of the outer cell wall layer.

It is found in the secreted. The protein resides in the cell wall. The protein localises to the membrane. In terms of biological role, involved in the uptake of non-siderophore sources of iron and the siderophores ferrioxamine B and ferrichrome. Has a role in the retention of iron in the cell wall and periplasmic space. The sequence is that of Facilitator of iron transport 1 (FIT1) from Saccharomyces cerevisiae (strain ATCC 204508 / S288c) (Baker's yeast).